Reading from the N-terminus, the 432-residue chain is Succinate--CoA ligase [GDP-forming] subunit beta, mitochondrial (432 aa).

The transit peptide at 1 to 37 (MAAPVGAQARKLLRDLVLRPPLLAARSQVVQLTSRRW) directs the protein to the mitochondrion. In terms of domain architecture, ATP-grasp spans 46–274 (KKLMSDNGVK…NAEFRQKDIF (229 aa)). Residue Gln-57 participates in GTP binding. Lys-73 is modified (N6-acetyllysine). Lys-78 is modified (N6-succinyllysine). A GTP-binding site is contributed by 90 to 92 (GRG). N6-acetyllysine is present on residues Lys-111, Lys-132, and Lys-139. Position 146 (Leu-146) interacts with GTP. Phosphoserine is present on Ser-161. Lys-200, Lys-218, and Lys-227 each carry N6-acetyllysine. Positions 243 and 257 each coordinate Mg(2+). Position 271 is an N6-acetyllysine (Lys-271). Residue Asn-308 participates in substrate binding. The residue at position 338 (Lys-338) is an N6-succinyllysine. N6-acetyllysine is present on Lys-347. 365 to 367 (GIV) lines the substrate pocket. 2 positions are modified to N6-acetyllysine: Lys-386 and Lys-423.

Belongs to the succinate/malate CoA ligase beta subunit family. GTP-specific subunit beta subfamily. As to quaternary structure, heterodimer of an alpha and a beta subunit. The beta subunit determines specificity for GTP. Requires Mg(2+) as cofactor.

It localises to the mitochondrion. It carries out the reaction GTP + succinate + CoA = succinyl-CoA + GDP + phosphate. Its pathway is carbohydrate metabolism; tricarboxylic acid cycle; succinate from succinyl-CoA (ligase route): step 1/1. In terms of biological role, GTP-specific succinyl-CoA synthetase functions in the citric acid cycle (TCA), coupling the hydrolysis of succinyl-CoA to the synthesis of GTP and thus represents the only step of substrate-level phosphorylation in the TCA. The beta subunit provides nucleotide specificity of the enzyme and binds the substrate succinate, while the binding sites for coenzyme A and phosphate are found in the alpha subunit. The sequence is that of Succinate--CoA ligase [GDP-forming] subunit beta, mitochondrial from Bos taurus (Bovine).